The sequence spans 464 residues: Chaperone SurA (464 aa).

Positions 1-25 (MTRYFSIVLSLLLAVSCVFLPVASA) are cleaved as a signal peptide. 2 consecutive PpiC domains span residues 175–277 (GAQY…KLVE) and 292–391 (ATEY…QRLG). Residues 439-464 (PADDHQTPSAAVIPATGAVLPSATKH) are disordered.

Its subcellular location is the periplasm. It catalyses the reaction [protein]-peptidylproline (omega=180) = [protein]-peptidylproline (omega=0). Functionally, chaperone involved in the correct folding and assembly of outer membrane proteins. Recognizes specific patterns of aromatic residues and the orientation of their side chains, which are found more frequently in integral outer membrane proteins. May act in both early periplasmic and late outer membrane-associated steps of protein maturation. The polypeptide is Chaperone SurA (Xylella fastidiosa (strain 9a5c)).